We begin with the raw amino-acid sequence, 37 residues long: Delta-amaurobitoxin-Pl1b (37 aa).

4 disulfide bridges follow: cysteine 2–cysteine 18, cysteine 9–cysteine 23, cysteine 17–cysteine 33, and cysteine 25–cysteine 31. At serine 37 the chain carries Serine amide.

The protein belongs to the neurotoxin 07 (Beta/delta-agtx) family. 02 (aga-3) subfamily. Expressed by the venom gland.

It localises to the secreted. In terms of biological role, insecticidal toxin. Binds to site 4 of insect voltage-gated sodium channel (Nav) and inhibits channel inactivation. In vivo, it lethal to lepidopteran larvae. Has no adverse affects when intracerebroventricularly injected in mice at a dose of 0.2 ug, but causes reversible paralysis of legs when injected intracerebroventricularly in mice at a dose of 2.0 ug. The sequence is that of Delta-amaurobitoxin-Pl1b from Pireneitega luctuosa (Tangled nest spider).